A 147-amino-acid chain; its full sequence is Large ribosomal subunit protein uL13 (147 aa).

The protein belongs to the universal ribosomal protein uL13 family. Part of the 50S ribosomal subunit.

Its function is as follows. This protein is one of the early assembly proteins of the 50S ribosomal subunit, although it is not seen to bind rRNA by itself. It is important during the early stages of 50S assembly. The sequence is that of Large ribosomal subunit protein uL13 from Pseudothermotoga lettingae (strain ATCC BAA-301 / DSM 14385 / NBRC 107922 / TMO) (Thermotoga lettingae).